We begin with the raw amino-acid sequence, 507 residues long: Branchpoint-bridging protein (507 aa).

A compositionally biased stretch (polar residues) spans 84–93; it reads DLNPPTSRYR. Residues 84–110 are disordered; sequence DLNPPTSRYRSLSPPPVYDSQGKRTNT. The 67-residue stretch at 154-220 folds into the KH domain; that stretch reads YIPINDYPEI…NMNEPLHCVI (67 aa). CCHC-type zinc fingers lie at residues 272-289 and 297-314; these read RPCPLCGEQGHKKWECSS and VICQRCNQPGHAARDCTS. The interval 307–507 is disordered; it reads HAARDCTSPL…PPPPPPPPSS (201 aa). Basic and acidic residues predominate over residues 319-336; that stretch reads FGKRTSDGPEFRETKKLQ. Low complexity predominate over residues 345-376; it reads PVGSHPSAPGSGSANSGVAPASLHPPGTMAPP. 2 stretches are compositionally biased toward pro residues: residues 390-412 and 440-449; these read TLPPPAALPAPAAPGTLPPPVAL and EGPPAPPQTA. The segment covering 450–469 has biased composition (low complexity); that stretch reads PPLRQTAATASSAGSSQSAQ. Residues 484-507 are compositionally biased toward pro residues; sequence PGPPAAVLPPPPPPPPPPPPPPSS.

It belongs to the BBP/SF1 family.

It is found in the nucleus. Functionally, necessary for the splicing of pre-mRNA. Has a role in the recognition of the branch site (5'-UACUAAC-3'), the pyrimidine tract and the 3'-splice site at the 3'-end of introns. In Eremothecium gossypii (strain ATCC 10895 / CBS 109.51 / FGSC 9923 / NRRL Y-1056) (Yeast), this protein is Branchpoint-bridging protein (BBP).